We begin with the raw amino-acid sequence, 282 residues long: Pantothenate synthetase (282 aa).

30-37 contacts ATP; it reads MGNLHLGH. H37 acts as the Proton donor in catalysis. Residue Q61 coordinates (R)-pantoate. Position 61 (Q61) interacts with beta-alanine. 149–152 is an ATP binding site; sequence GQKD. Residue Q155 coordinates (R)-pantoate. ATP-binding positions include I178 and 186–189; that span reads MSSR.

This sequence belongs to the pantothenate synthetase family. Homodimer.

The protein resides in the cytoplasm. It catalyses the reaction (R)-pantoate + beta-alanine + ATP = (R)-pantothenate + AMP + diphosphate + H(+). It participates in cofactor biosynthesis; (R)-pantothenate biosynthesis; (R)-pantothenate from (R)-pantoate and beta-alanine: step 1/1. Functionally, catalyzes the condensation of pantoate with beta-alanine in an ATP-dependent reaction via a pantoyl-adenylate intermediate. The polypeptide is Pantothenate synthetase (Shewanella piezotolerans (strain WP3 / JCM 13877)).